Reading from the N-terminus, the 131-residue chain is Small ribosomal subunit protein uS8c (131 aa).

The protein belongs to the universal ribosomal protein uS8 family. Part of the 30S ribosomal subunit.

The protein localises to the plastid. The protein resides in the chloroplast. In terms of biological role, one of the primary rRNA binding proteins, it binds directly to 16S rRNA central domain where it helps coordinate assembly of the platform of the 30S subunit. This chain is Small ribosomal subunit protein uS8c (rps8), found in Phalaenopsis aphrodite subsp. formosana (Moth orchid).